The chain runs to 480 residues: Endothelial transcription factor GATA-2 (480 aa).

Residue Ser73 is modified to Phosphoserine. At Arg86 the chain carries Asymmetric dimethylarginine. The segment at 166 to 208 (SGSHLFGFPPTPPKEVSPDPSTTGAASPASPSAGGSVARGEDK) is disordered. Low complexity predominate over residues 183–201 (PDPSTTGAASPASPSAGGS). Ser192 carries the phosphoserine modification. 2 consecutive GATA-type zinc fingers follow at residues 295–319 (CVNC…CNAC) and 349–373 (CANC…CNAC). Lys389 is covalently cross-linked (Glycyl lysine isopeptide (Lys-Gly) (interchain with G-Cter in SUMO2)). The interval 457 to 480 (TPIHPSSSLSFGHPHPSSMVTAMG) is disordered.

Interacts with BRD3. Interacts with AR and CCAR1. Interacts with MDFIC.

It localises to the nucleus. Its function is as follows. Transcriptional activator which regulates endothelin-1 gene expression in endothelial cells. Binds to the consensus sequence 5'-AGATAG-3'. Plays an important role in the regulation of phagocytosis in alveolar macrophages, particularly during P.carinii infection. This chain is Endothelial transcription factor GATA-2, found in Rattus norvegicus (Rat).